We begin with the raw amino-acid sequence, 491 residues long: Keratin, type I cytoskeletal 39 (491 aa).

The segment at 1 to 96 (MDTKGCTTTN…WYGEGINSNE (96 aa)) is head. In terms of domain architecture, IF rod spans 96-407 (EKETMQILNE…SLLESSDGKR (312 aa)). Positions 97 to 131 (KETMQILNERLANYLQKVRMLERENAELESKIQEE) are coil 1A. The interval 132 to 142 (SNKELPVLCPD) is linker 1. Residues 143–243 (YLSYYTTIEE…HKEEINSLQC (101 aa)) form a coil 1B region. Residues 244–259 (QLGERLDIEVTAAPSA) are linker 12. The segment at 260 to 403 (DLNQVLQEMR…TTYRSLLESS (144 aa)) is coil 2. The tail stretch occupies residues 404 to 491 (DGKRPCYPRA…PCFIIRPAKV (88 aa)).

The protein belongs to the intermediate filament family. Heterotetramer of two type I and two type II keratins. As to expression, expressed in skin and scalp. In the hair follicle, it is present in the upper hair cuticle and the upper cortex. Also present in the in the upper portion of beard hairs (at protein level).

In terms of biological role, may play a role in late hair differentiation. The protein is Keratin, type I cytoskeletal 39 (KRT39) of Homo sapiens (Human).